The following is a 140-amino-acid chain: uncharacterized protein (140 aa).

The segment at Cys21–His42 adopts a C2H2-type zinc-finger fold.

To M.jannaschii MJECL27.

This is an uncharacterized protein from Methanocaldococcus jannaschii (strain ATCC 43067 / DSM 2661 / JAL-1 / JCM 10045 / NBRC 100440) (Methanococcus jannaschii).